The following is a 156-amino-acid chain: Small ribosomal subunit protein uS7 (156 aa).

It belongs to the universal ribosomal protein uS7 family. As to quaternary structure, part of the 30S ribosomal subunit. Contacts proteins S9 and S11.

In terms of biological role, one of the primary rRNA binding proteins, it binds directly to 16S rRNA where it nucleates assembly of the head domain of the 30S subunit. Is located at the subunit interface close to the decoding center, probably blocks exit of the E-site tRNA. The protein is Small ribosomal subunit protein uS7 of Synechocystis sp. (strain ATCC 27184 / PCC 6803 / Kazusa).